Reading from the N-terminus, the 176-residue chain is ATP synthase subunit delta (176 aa).

It belongs to the ATPase delta chain family. As to quaternary structure, F-type ATPases have 2 components, F(1) - the catalytic core - and F(0) - the membrane proton channel. F(1) has five subunits: alpha(3), beta(3), gamma(1), delta(1), epsilon(1). F(0) has three main subunits: a(1), b(2) and c(10-14). The alpha and beta chains form an alternating ring which encloses part of the gamma chain. F(1) is attached to F(0) by a central stalk formed by the gamma and epsilon chains, while a peripheral stalk is formed by the delta and b chains.

Its subcellular location is the cell inner membrane. In terms of biological role, f(1)F(0) ATP synthase produces ATP from ADP in the presence of a proton or sodium gradient. F-type ATPases consist of two structural domains, F(1) containing the extramembraneous catalytic core and F(0) containing the membrane proton channel, linked together by a central stalk and a peripheral stalk. During catalysis, ATP synthesis in the catalytic domain of F(1) is coupled via a rotary mechanism of the central stalk subunits to proton translocation. Functionally, this protein is part of the stalk that links CF(0) to CF(1). It either transmits conformational changes from CF(0) to CF(1) or is implicated in proton conduction. The polypeptide is ATP synthase subunit delta (Campylobacter fetus subsp. fetus (strain 82-40)).